Here is a 180-residue protein sequence, read N- to C-terminus: Alkyl hydroperoxide reductase AhpD (180 aa).

Residue Cys-131 is the Proton donor of the active site. An intrachain disulfide couples Cys-131 to Cys-134. Cys-134 serves as the catalytic Cysteine sulfenic acid (-SOH) intermediate.

This sequence belongs to the AhpD family.

It catalyses the reaction N(6)-[(R)-dihydrolipoyl]-L-lysyl-[lipoyl-carrier protein] + a hydroperoxide = N(6)-[(R)-lipoyl]-L-lysyl-[lipoyl-carrier protein] + an alcohol + H2O. Antioxidant protein with alkyl hydroperoxidase activity. Required for the reduction of the AhpC active site cysteine residues and for the regeneration of the AhpC enzyme activity. The protein is Alkyl hydroperoxide reductase AhpD of Beijerinckia indica subsp. indica (strain ATCC 9039 / DSM 1715 / NCIMB 8712).